The chain runs to 421 residues: Inner membrane transport protein YdiN (421 aa).

The Cytoplasmic segment spans residues 1–9 (MSQNKAFST). The chain crosses the membrane as a helical span at residues 10 to 30 (PFILAVLCIYFSYFLHGISVI). Topologically, residues 31–49 (TLAQNMSSLAEKFSTDNAG) are periplasmic. Residues 50–70 (IAYLISGIGLGRLISILFFGV) form a helical membrane-spanning segment. The Cytoplasmic portion of the chain corresponds to 71-78 (ISDKFGRR). The chain crosses the membrane as a helical span at residues 79 to 99 (AVILMAVIMYLLFFFGIPACP). A topological domain (periplasmic) is located at residue Asn100. The chain crosses the membrane as a helical span at residues 101–121 (LTLAYGLAVCVGIANSALDTG). Residues 122-136 (GYPALMECFPKASGS) are Cytoplasmic-facing. Residues 137–157 (AVILVKAMVSFGQMFYPMLVS) traverse the membrane as a helical segment. At 158 to 163 (YMLLNN) the chain is on the periplasmic side. A helical membrane pass occupies residues 164–184 (IWYGYGLIIPGILFVLITLML). Residues 185 to 215 (LKSKFPSQLVDASVTNELPQMNSKPLVWLEG) lie on the Cytoplasmic side of the membrane. A helical membrane pass occupies residues 216 to 236 (VSSVLFGVAAFSTFYVIVVWM). At 237–251 (PKYAMAFAGMSEAEA) the chain is on the periplasmic side. A helical membrane pass occupies residues 252-272 (LKTISYYSMGSLVCVFIFAAL). Residues 273-279 (LKKMVRP) are Cytoplasmic-facing. Residues 280–300 (IWANVFNSALATITAAIIYLY) traverse the membrane as a helical segment. Residues 301-308 (PSPLVCNA) lie on the Periplasmic side of the membrane. A helical transmembrane segment spans residues 309–329 (GAFVIGFSAAGGILQLGVSVM). At 330–342 (SEFFPKSKAKVTS) the chain is on the cytoplasmic side. The chain crosses the membrane as a helical span at residues 343–363 (IYMMMGGLANFVIPLITGYLS). The Periplasmic segment spans residues 364 to 369 (NIGLQY). The helical transmembrane segment at 370 to 390 (IIVLDFTFALLALITAIIVFI) threads the bilayer. Over 391–421 (RYYRVFIIPENDVRFGERKFCTRLNTIKHRG) the chain is Cytoplasmic.

It belongs to the major facilitator superfamily.

It localises to the cell inner membrane. This is Inner membrane transport protein YdiN (ydiN) from Escherichia coli (strain K12).